A 249-amino-acid polypeptide reads, in one-letter code: Probable phosphatase Spea_1436 (249 aa).

The Zn(2+) site is built by histidine 8, histidine 10, histidine 16, histidine 41, glutamate 74, histidine 102, histidine 132, aspartate 193, and histidine 195.

This sequence belongs to the PHP family. Requires Zn(2+) as cofactor.

This is Probable phosphatase Spea_1436 from Shewanella pealeana (strain ATCC 700345 / ANG-SQ1).